We begin with the raw amino-acid sequence, 962 residues long: Rho GTPase-activating protein syd-1 (962 aa).

3 disordered regions span residues 231–367 (GKKS…MRSD), 397–419 (PRTL…RIMT), and 437–471 (CGEE…NGSP). Composition is skewed to polar residues over residues 243 to 261 (NATT…SSPR), 323 to 345 (SFNS…SSTA), 401 to 412 (RQPNDSNKSNSL), and 453 to 471 (PPFS…NGSP). Residues 572–696 (RAAGPGINVD…NDDRVFALNL (125 aa)) form the C2 domain. Residues 729–923 (VPLGRLVQRE…LDMNQASSSL (195 aa)) form the Rho-GAP domain. Polar residues predominate over residues 934 to 947 (VNSESGSDSPATSG). Residues 934–962 (VNSESGSDSPATSGQKGGGGVSYVSESQC) form a disordered region.

It localises to the synapse. Its function is as follows. Probable GTPase activator for the Rho-type GTPases by converting them to an inactive GDP-bound state. Regulates the localization and assembly of presynaptic components during presynaptic development and is required for specifying the identity of axons during initial polarity acquisition. In these roles it is thought to act cell autonomously downstream of syg-1 and syg-2 and upstream of syd-2, possibly as a positive regulator of the latter. Required for the control of movement, egg-laying and the correct localization of elks-1. This chain is Rho GTPase-activating protein syd-1, found in Caenorhabditis briggsae.